The sequence spans 132 residues: Agouti-signaling protein (132 aa).

An N-terminal signal peptide occupies residues methionine 1–serine 22. The N-linked (GlcNAc...) asparagine glycan is linked to asparagine 39. A disordered region spans residues glutamine 61–threonine 87. Residues serine 63–methionine 79 are compositionally biased toward basic and acidic residues. 5 cysteine pairs are disulfide-bonded: cysteine 93/cysteine 108, cysteine 100/cysteine 114, cysteine 107/cysteine 125, cysteine 111/cysteine 132, and cysteine 116/cysteine 123. Positions cysteine 93–cysteine 132 constitute an Agouti domain.

Its subcellular location is the secreted. Involved in the regulation of melanogenesis. The binding of ASP to MC1R precludes alpha-MSH initiated signaling and thus blocks production of cAMP, leading to a down-regulation of eumelanogenesis (brown/black pigment) and thus increasing synthesis of pheomelanin (yellow/red pigment). This chain is Agouti-signaling protein (ASIP), found in Macaca nigrescens (Gorontalo macaque).